We begin with the raw amino-acid sequence, 198 residues long: Glycerol-3-phosphate acyltransferase (198 aa).

5 consecutive transmembrane segments (helical) span residues 5–25 (LILLSLLAYVIGSIPSGLWIG), 56–76 (SIVTVMDILKGTVATLLPFFF), 84–104 (FWLLTGAFAIIGHSFPLFAGF), 114–134 (AGVILAYAPLLFVAALIIFLL), and 158–178 (LFMGDWILIILIACITLFVVW).

This sequence belongs to the PlsY family. Probably interacts with PlsX.

Its subcellular location is the cell membrane. The enzyme catalyses an acyl phosphate + sn-glycerol 3-phosphate = a 1-acyl-sn-glycero-3-phosphate + phosphate. The protein operates within lipid metabolism; phospholipid metabolism. Its function is as follows. Catalyzes the transfer of an acyl group from acyl-phosphate (acyl-PO(4)) to glycerol-3-phosphate (G3P) to form lysophosphatidic acid (LPA). This enzyme utilizes acyl-phosphate as fatty acyl donor, but not acyl-CoA or acyl-ACP. This chain is Glycerol-3-phosphate acyltransferase, found in Listeria welshimeri serovar 6b (strain ATCC 35897 / DSM 20650 / CCUG 15529 / CIP 8149 / NCTC 11857 / SLCC 5334 / V8).